Reading from the N-terminus, the 263-residue chain is MFEAKLANAGLLKKIVESIKDLVTDAPFDCSETAMSLQAMDSSHVALVSLKLEVGLFDTYRCDRTINLGLSLANMSKALKCANNDDTCMLKYEENEGDSIIFTFADPKRDKTQDVTVKMMDIDSEHLGIPDQDYAVVCEMPAGEFQKTCKDLSTFSDSLNITATKAGIVFTGKGDIGSSVVTYSPSSNTDDETEAVTLEVKDPVNVNFSIKYMNQFTKATALSDRVRLSLCNDVPVVVEYPIEENGYLRFYLAPKIDDDENMD.

Residues 61 to 80 (RCDRTINLGLSLANMSKALK) mediate DNA binding.

The protein belongs to the PCNA family. As to quaternary structure, homotrimer. Forms a complex with activator 1 heteropentamer in the presence of ATP.

It is found in the nucleus. Functionally, this protein is an auxiliary protein of DNA polymerase delta and is involved in the control of eukaryotic DNA replication by increasing the polymerase's processibility during elongation of the leading strand. This chain is Proliferating cell nuclear antigen (pcn-1), found in Caenorhabditis elegans.